A 275-amino-acid chain; its full sequence is Hydroxyethylthiazole kinase (275 aa).

A substrate-binding site is contributed by Met-50. The ATP site is built by Arg-126 and Ser-171. Residue Ala-200 coordinates substrate.

The protein belongs to the Thz kinase family. Requires Mg(2+) as cofactor.

It carries out the reaction 5-(2-hydroxyethyl)-4-methylthiazole + ATP = 4-methyl-5-(2-phosphooxyethyl)-thiazole + ADP + H(+). Its pathway is cofactor biosynthesis; thiamine diphosphate biosynthesis; 4-methyl-5-(2-phosphoethyl)-thiazole from 5-(2-hydroxyethyl)-4-methylthiazole: step 1/1. Catalyzes the phosphorylation of the hydroxyl group of 4-methyl-5-beta-hydroxyethylthiazole (THZ). The sequence is that of Hydroxyethylthiazole kinase from Acinetobacter baumannii (strain ACICU).